The chain runs to 1271 residues: MTEDNAEGQETALSSQNLVSVEITLPKDVSGASKPLTVKMAESDTISDLTSTLGLLSSMRDLTNYYVFYRNTNISETFDELCPISEVISALRVESQPNVKLELRHKPYTLAAVYEHLNKFREVIGLHFIDRRAFELGELSGVGKFDQLQLSQVPDQKEDEKEKVDLGEDDKASISSICDRILDETKLDLSEYGKFYDIYSDLQVPIKSLTISQWSPVSPKEAVRGDLLYLTLQTLENDTYHITCHLSGFFVNSCSTVNFNPARKPSHEPKFLFFDLVSSLSPAFAKTIARNEEILANSSRYAESYLIPSHTSGSYPWLVDTSAISRKPDQSRPQLSILNNGVDGSDNVKDWNEDFQAIRELPSGTVNERILRERLAIKLVSEFTKQATETAVNIIKGNLTPMNPNESVEQHIYMRNGIFYSSGVNATGAFDETGGNEAARYAAAKDLAGVKLLNRIDAKGIYHLATCVVDYMGRRIVCQAPVPGILNDPIVESDEAPADKVCYGLSTDGTKVYSDSQFHEALKPIAEAFHMKPHKVTLPNGFKTKEDIALSKDSKGIRGTDGRNYVIDLYRSTPLDIDFIEKHWRPEHSDSYPHRETVLRHEAVEEWWRRRALAIFKSETERLEAEQGAKKNEGESEKPQILLDAQKVSFNPDAFTHDEVDEEDKEVVREMSLFVTKQLIEEFVEESKKQLCPFDGSHLSSLLHKAGINLRYLGLIATRAQESLEAFEQEEKSKIEDNEKAIEEEKKEEKTEKKEEKEEKADEEKSENEEDKTKPEEPSKGVFDPIKANLNSVRLLAIQEMIARAVKHIFRSFAHTLSSYLLPYFVAHFHNCLLGSQVSSKPEISIDETLTAFADPDALRFITLDHQQVVSMVEEEVLLRFRFELPENWINAVSPITMMREISHKFGIQWKTQGYAFTAEGFKEFQQSTENIIVHKQKSSKKSKKRSSPSVEEVFKRKTIFVADDIISFTPSVKSSSYKATLLDEIFEAARGKIAAEEKDSGVTLLNELVSIYEQIYGVVHPETSNFYSVLSQFYSDLGFTTEASEVARKACVLFERTAGFDSFETISSYINSAYFEAANSSYVNAFKLYEKALGDWDFVFGSHHPSSVTTLTNLAEILAQLKITDKANRLFSAALELSEKINGEDSQITAMIHYRFAGTLVNENRFDEALGHFEKAHTTFSRHIDPNDRLTKDCSNYVANLKTYIAYMKQQAKDKNKPKKVKAPPVPPQATTKKSKNKSKMAQTQISKLHLNSSTRFSSSSRVKPRLKKK.

TPR repeat units follow at residues 104–138 (RHKPYTLAAVYEHLNKFREVIGLHFIDRRAFELGE) and 502–535 (CYGLSTDGTKVYSDSQFHEALKPIAEAFHMKPHK). In terms of domain architecture, Clu spans 329-580 (DQSRPQLSIL…RSTPLDIDFI (252 aa)). The segment covering 729–763 (QEEKSKIEDNEKAIEEEKKEEKTEKKEEKEEKADE) has biased composition (basic and acidic residues). A disordered region spans residues 729–783 (QEEKSKIEDNEKAIEEEKKEEKTEKKEEKEEKADEEKSENEEDKTKPEEPSKGVF). TPR repeat units follow at residues 1067–1100 (ISSYINSAYFEAANSSYVNAFKLYEKALGDWDFV), 1109–1142 (VTTLTNLAEILAQLKITDKANRLFSAALELSEKI), and 1151–1184 (AMIHYRFAGTLVNENRFDEALGHFEKAHTTFSRH). A disordered region spans residues 1212-1271 (QAKDKNKPKKVKAPPVPPQATTKKSKNKSKMAQTQISKLHLNSSTRFSSSSRVKPRLKKK). The segment covering 1241 to 1253 (KMAQTQISKLHLN) has biased composition (polar residues). Residues 1254–1263 (SSTRFSSSSR) are compositionally biased toward low complexity.

This sequence belongs to the CLU family. As to quaternary structure, may associate with the eukaryotic translation initiation factor 3 (eIF-3) complex.

The protein resides in the cytoplasm. Functionally, mRNA-binding protein involved in proper cytoplasmic distribution of mitochondria. The protein is Clustered mitochondria protein homolog of Meyerozyma guilliermondii (strain ATCC 6260 / CBS 566 / DSM 6381 / JCM 1539 / NBRC 10279 / NRRL Y-324) (Yeast).